The following is a 77-amino-acid chain: uncharacterized protein (77 aa).

The chain crosses the membrane as a helical span at residues 13 to 33 (VPVIRLSVFLHFFFVFPFCLL).

It localises to the membrane. This is an uncharacterized protein from Saccharomyces cerevisiae (strain ATCC 204508 / S288c) (Baker's yeast).